The following is a 228-amino-acid chain: Cytidylate kinase (228 aa).

12–20 (GPSGSGKGT) contributes to the ATP binding site.

It belongs to the cytidylate kinase family. Type 1 subfamily.

The protein resides in the cytoplasm. The catalysed reaction is CMP + ATP = CDP + ADP. The enzyme catalyses dCMP + ATP = dCDP + ADP. This is Cytidylate kinase from Pseudomonas putida (strain W619).